Here is a 685-residue protein sequence, read N- to C-terminus: E3 ubiquitin-protein ligase RNF6 (685 aa).

3 stretches are compositionally biased toward basic and acidic residues: residues 1–10 (MNQSRSRSDG), 17–29 (PQDH…ERRW), and 88–107 (DLRD…SSHE). 6 disordered regions span residues 1 to 29 (MNQS…ERRW), 81 to 107 (EQLA…SSHE), 121 to 142 (GNAT…RTNP), 168 to 273 (DYTD…REGQ), 286 to 345 (RSNV…RRRG), and 499 to 576 (EADS…NPNN). Polar residues-rich tracts occupy residues 199 to 213 (SQTS…SNIP), 250 to 264 (ASRT…QSGG), and 286 to 297 (RSNVTVRNTNQR). Residues 303 to 313 (LRSTSNSRSRS) show a composition bias toward low complexity. Polar residues-rich tracts occupy residues 314 to 325 (PIQRQSGTVYHN) and 519 to 528 (ELSNLGTDNN). The segment at 632–673 (CSVCISDYVTGNKLRQLPCMHEFHIHCIDRWLSENCTCPICR) adopts an RING-type zinc-finger fold.

It belongs to the RNF12 family. As to expression, weakly expressed in peripheral blood, spleen, prostate, testis and ovary. According to a report, it is preferentially expressed in testis and ovary and hardly detected in other tissues.

The protein resides in the nucleus. Its subcellular location is the cytoplasm. It is found in the cell projection. The protein localises to the axon. It localises to the PML body. The enzyme catalyses S-ubiquitinyl-[E2 ubiquitin-conjugating enzyme]-L-cysteine + [acceptor protein]-L-lysine = [E2 ubiquitin-conjugating enzyme]-L-cysteine + N(6)-ubiquitinyl-[acceptor protein]-L-lysine.. It participates in protein modification; protein ubiquitination. E3 ubiquitin-protein ligase mediating 'Lys-48'-linked polyubiquitination of LIMK1 and its subsequent targeting to the proteasome for degradation. Negatively regulates axonal outgrowth through regulation of the LIMK1 turnover. Mediates 'Lys-6' and 'Lys-27'-linked polyubiquitination of AR/androgen receptor thereby modulating its transcriptional activity. May also bind DNA and function as a transcriptional regulator. Mediates polyubiquitination of QKI in macrophages, leading to its degradation. The polypeptide is E3 ubiquitin-protein ligase RNF6 (Homo sapiens (Human)).